A 632-amino-acid chain; its full sequence is Cleavage stimulation factor subunit 2 tau variant (632 aa).

In terms of domain architecture, RRM spans 16-94 (RSVFVGNIPY…RALRVDNAAS (79 aa)). Disordered regions lie at residues 201–296 (IPGK…PGGA) and 365–433 (YMGP…TRPM). Residues 213–233 (PGGPGPSGPGGPGPGPAPGLC) show a composition bias toward pro residues. A compositionally biased stretch (low complexity) spans 234–244 (PGPNVMLNQQN). Residues 275–287 (APGPIPAAVPGPG) show a composition bias toward pro residues. Residues 365–375 (YMGPPHQGPPM) show a composition bias toward low complexity. Composition is skewed to basic and acidic residues over residues 377-390 (HGHD…HDMR) and 420-433 (RGGR…TRPM). The stretch at 428–432 (METRP) is one 1-1; approximate repeat. The 8 X 5 AA tandem repeats of M-E-T-R-[AG] stretch occupies residues 428-466 (METRPMETEVLEPRGMERRMETCAMETRGMDARGLEMRG). A 1-2; approximate repeat occupies 433–437 (METEV). One copy of the 1-3; approximate repeat lies at 438–442 (LEPRG). One copy of the 1-4; approximate repeat lies at 443–446 (MERR). One copy of the 1-5; approximate repeat lies at 447-451 (METCA). A 1-6 repeat occupies 452–456 (METRG). A 1-7; approximate repeat occupies 457–461 (MDARG). Residues 462–466 (LEMRG) form a 1-8; approximate repeat. Residues 508 to 512 (GGTMQ) form a 2-1; approximate repeat. A 12 X 5 AA tandem repeats of G-[AT]-G-[MI]-Q region spans residues 508 to 565 (GGTMQGAGIQGGGMQGAGMQGGGMQGAGMQGGGMQGAGMQAGMQGASMQGGMQGAGMQ). Residues 513 to 517 (GAGIQ) form a 2-2 repeat. The 2-3; approximate repeat unit spans residues 518–522 (GGGMQ). Gly residues predominate over residues 519–543 (GGMQGAGMQGGGMQGAGMQGGGMQG). The interval 519–590 (GGMQGAGMQG…GQSQVTPQDQ (72 aa)) is disordered. One copy of the 2-4 repeat lies at 523–527 (GAGMQ). A 2-5; approximate repeat occupies 528 to 532 (GGGMQ). Residues 533–537 (GAGMQ) form a 2-6 repeat. One copy of the 2-7; approximate repeat lies at 538–542 (GGGMQ). The stretch at 543–547 (GAGMQ) is one 2-8 repeat. Residues 544–557 (AGMQAGMQGASMQG) are compositionally biased toward low complexity. Residues 548–551 (AGMQ) form a 2-9; approximate repeat. One copy of the 2-10; approximate repeat lies at 552 to 556 (GASMQ). The stretch at 557 to 560 (GGMQ) is one 2-11; approximate repeat. Residues 558 to 574 (GMQGAGMQGASKQGGGQ) are compositionally biased toward gly residues. The 2-12 repeat unit spans residues 561–565 (GAGMQ). Over residues 575–584 (PSSFSPGQSQ) the composition is skewed to low complexity. Position 579 is a phosphoserine (Ser579).

Expressed in testes, where it is restricted to pachytene spermatocytes and spermatids, and in the brain (at protein level).

The protein resides in the nucleus. In terms of biological role, may play a significant role in AAUAAA-independent mRNA polyadenylation in germ cells. Directly involved in the binding to pre-mRNAs. This is Cleavage stimulation factor subunit 2 tau variant (Cstf2t) from Mus musculus (Mouse).